The following is a 39-amino-acid chain: Hementin (39 aa).

A divalent metal cation is required as a cofactor. In terms of tissue distribution, expressed mainly in the posterior salivary glands and, to a lesser extent, in the anterior salivary glands and secreted into the proboscis (at protein level).

It localises to the secreted. With respect to regulation, inhibited by EDTA, cysteine, DTT and sodium phosphate. Partially inhibited by EGTA, citrate, Tris and glycine. Not inhibited by DFP, PMSF, iodoacetic acid and leupeptin. Requires sodium chloride concentrations higher than 0.15 M for activity. Functionally, metalloprotease with anticoagulant activity. Cleaves fibrinogen Aalpha (FGA), gamma (FGG) and Bbeta (FGB) chains after positions 'Asn-121', 'Lys-160' and 'Pro-102', respectively. Breaks down cross-linked and non-cross-linked fibrin clots. Prevents and reverts platelet aggregation induced by ADP and collagen. Prevents thrombin-induced platelet clotting. Does not affect plasma levels of coagulation factors prothrombin (F2), V (F5), VII (F7), VIII (F8), IX (F9), X (F10), XI (F11), XII (F12), plasma kallikrein (KLKB1) and kininogen-1 (KNG1). The sequence is that of Hementin from Haementeria ghilianii (Amazon leech).